Consider the following 171-residue polypeptide: Small ribosomal subunit protein uS5 (171 aa).

The S5 DRBM domain maps to 16–79 (LIEKIVFINR…ERARKDMALV (64 aa)).

It belongs to the universal ribosomal protein uS5 family. Part of the 30S ribosomal subunit. Contacts proteins S4 and S8.

In terms of biological role, with S4 and S12 plays an important role in translational accuracy. Functionally, located at the back of the 30S subunit body where it stabilizes the conformation of the head with respect to the body. This Desulfotalea psychrophila (strain LSv54 / DSM 12343) protein is Small ribosomal subunit protein uS5.